The chain runs to 38 residues: Mating hormone A-factor 2 (38 aa).

A compositionally biased stretch (polar residues) spans 1 to 12; it reads MQPITTASTQAT. The tract at residues 1-20 is disordered; it reads MQPITTASTQATQKDKSSEK. Residues 1-23 constitute a propeptide that is removed on maturation; sequence MQPITTASTQATQKDKSSEKKDN. At cysteine 35 the chain carries Cysteine methyl ester. A lipid anchor (S-farnesyl cysteine) is attached at cysteine 35. Residues 36 to 38 constitute a propeptide, removed in mature form; that stretch reads VIA.

It is found in the cell membrane. Its function is as follows. The active factor is excreted into the culture medium by haploid cells of the A mating type and acts on cells of the opposite mating type (type alpha). It mediates the conjugation process between the two types by inhibiting the initiation of DNA synthesis in type alpha cells and synchronizing them with type A. The sequence is that of Mating hormone A-factor 2 (MFA2) from Saccharomyces cerevisiae (strain ATCC 204508 / S288c) (Baker's yeast).